Here is a 305-residue protein sequence, read N- to C-terminus: Phosphatidylglycerol--prolipoprotein diacylglyceryl transferase (305 aa).

The next 3 membrane-spanning stretches (helical) occupy residues 10-30 (FLIS…GAII), 59-79 (LMLG…AFEW), and 92-112 (LTTG…STVI). A 1,2-diacyl-sn-glycero-3-phospho-(1'-sn-glycerol) is bound at residue Arg-140. A run of 2 helical transmembrane segments spans residues 182–202 (LFHP…GILL) and 260–280 (IRVA…LIFL).

This sequence belongs to the Lgt family.

Its subcellular location is the cell membrane. The enzyme catalyses L-cysteinyl-[prolipoprotein] + a 1,2-diacyl-sn-glycero-3-phospho-(1'-sn-glycerol) = an S-1,2-diacyl-sn-glyceryl-L-cysteinyl-[prolipoprotein] + sn-glycerol 1-phosphate + H(+). It participates in protein modification; lipoprotein biosynthesis (diacylglyceryl transfer). Its function is as follows. Catalyzes the transfer of the diacylglyceryl group from phosphatidylglycerol to the sulfhydryl group of the N-terminal cysteine of a prolipoprotein, the first step in the formation of mature lipoproteins. The sequence is that of Phosphatidylglycerol--prolipoprotein diacylglyceryl transferase from Chloroflexus aggregans (strain MD-66 / DSM 9485).